Here is a 300-residue protein sequence, read N- to C-terminus: 3-methyl-2-oxobutanoate hydroxymethyltransferase (300 aa).

Mg(2+) is bound by residues aspartate 75 and aspartate 118. 3-methyl-2-oxobutanoate-binding positions include 75 to 76 (DS), aspartate 118, and lysine 147. A Mg(2+)-binding site is contributed by glutamate 149. Glutamate 216 acts as the Proton acceptor in catalysis.

Belongs to the PanB family. As to quaternary structure, homodecamer; pentamer of dimers. It depends on Mg(2+) as a cofactor.

The protein localises to the cytoplasm. The enzyme catalyses 3-methyl-2-oxobutanoate + (6R)-5,10-methylene-5,6,7,8-tetrahydrofolate + H2O = 2-dehydropantoate + (6S)-5,6,7,8-tetrahydrofolate. Its pathway is cofactor biosynthesis; (R)-pantothenate biosynthesis; (R)-pantoate from 3-methyl-2-oxobutanoate: step 1/2. Catalyzes the reversible reaction in which hydroxymethyl group from 5,10-methylenetetrahydrofolate is transferred onto alpha-ketoisovalerate to form ketopantoate. The polypeptide is 3-methyl-2-oxobutanoate hydroxymethyltransferase (Verminephrobacter eiseniae (strain EF01-2)).